Here is a 510-residue protein sequence, read N- to C-terminus: MTPVVALVGRPNVGKSTLFNRLTRTRDALVADFPGLTRDRKYGHANIAGHDFIVIDTGGIDGTEEGIEEKMAEQSLLAIEEADVVLFLVDARAGLLPADIGIAQYLRQREKTTVVVANKTDGIDADSHCGEFYQLGLGEVAKIAAAQGRGVTQLIEQVLSPLATALNSEQADENEENLATETNEFDEWNQDFDFNNEEDTALLDEALDEENSESIADKNIKIAIIGRPNVGKSTLTNRILGEERVVVYDMPGTTRDSIYIPMERDGQEYTIIDTAGVRKRGKINLAVEKFSVIKTLQAIQDANVVLLTIDAREGISDQDLSLLGFILNAGRSLVIVVNKWDGLSYDIKEQVKSELDRRLDFIDFARVHFISALHGSGVGNLFDSVKEAYACATQKTSTSMLTRILHMAADEHQPPLVNGRRVKLKYAHPGGYNPPIIVIHGNQVEKLSDAYKRYLSNYFRKSLKIIGSPIRIQFQEGNNPFAGKKNKLTPNQLRKRKRLMKFIKKTKNKK.

2 EngA-type G domains span residues 3–166 and 220–393; these read PVVA…ATAL and IKIA…ACAT. Residues 9 to 16, 56 to 60, 118 to 121, 226 to 233, 273 to 277, and 338 to 341 each bind GTP; these read GRPNVGKS, DTGGI, NKTD, DTAGV, and NKWD. The KH-like domain occupies 394-478; the sequence is QKTSTSMLTR…PIRIQFQEGN (85 aa).

It belongs to the TRAFAC class TrmE-Era-EngA-EngB-Septin-like GTPase superfamily. EngA (Der) GTPase family. As to quaternary structure, associates with the 50S ribosomal subunit.

Functionally, GTPase that plays an essential role in the late steps of ribosome biogenesis. The chain is GTPase Der from Haemophilus ducreyi (strain 35000HP / ATCC 700724).